Reading from the N-terminus, the 294-residue chain is UPF0761 membrane protein YPTB0027 (294 aa).

A run of 7 helical transmembrane segments spans residues 44–64 (LLSLVPLITVIFALFAAFPMF), 67–87 (ISIKLKAFIFANFMPATGDII), 108–128 (GLIVTALLLIYSVDSVLNIIW), 136–156 (LVFSFAVYWMVLTLGPILVGA), 185–205 (VFPLLISWVSFWLLYSVVPTV), 212–232 (ALIGALVAALLFELGKKGFAM), and 246–266 (VLAVIPILFLWVYWSWCIVLL).

The protein belongs to the UPF0761 family.

It localises to the cell inner membrane. The polypeptide is UPF0761 membrane protein YPTB0027 (Yersinia pseudotuberculosis serotype I (strain IP32953)).